Consider the following 82-residue polypeptide: Small ribosomal subunit protein bS16 (82 aa).

Belongs to the bacterial ribosomal protein bS16 family.

The polypeptide is Small ribosomal subunit protein bS16 (Cyanothece sp. (strain PCC 7425 / ATCC 29141)).